Here is an 83-residue protein sequence, read N- to C-terminus: Putative beta-neurotoxin RjAa10f (83 aa).

A signal peptide spans 1–18 (MKILIFIIASFMLIGVWC). An LCN-type CS-alpha/beta domain is found at 19 to 82 (KEGYPMGRDG…VWDPNNNKCV (64 aa)). 4 disulfide bridges follow: Cys-29–Cys-81, Cys-33–Cys-55, Cys-40–Cys-62, and Cys-44–Cys-64.

The protein belongs to the long (4 C-C) scorpion toxin superfamily. Sodium channel inhibitor family. Beta subfamily. As to expression, expressed by the venom gland.

It is found in the secreted. Functionally, beta toxins bind voltage-independently at site-4 of sodium channels (Nav) and shift the voltage of activation toward more negative potentials thereby affecting sodium channel activation and promoting spontaneous and repetitive firing. This chain is Putative beta-neurotoxin RjAa10f, found in Rhopalurus junceus (Caribbean blue scorpion).